Reading from the N-terminus, the 150-residue chain is Lipoprotein signal peptidase (150 aa).

Transmembrane regions (helical) follow at residues 5–25, 59–79, and 82–102; these read LSLV…NWVV, QQWF…WFLW, and MGQN…LGNF. Residues Asp-113 and Asp-129 contribute to the active site. Residues 124–144 traverse the membrane as a helical segment; the sequence is IFNIADILLSVGFVVLFIAIL.

This sequence belongs to the peptidase A8 family.

It localises to the cell membrane. The enzyme catalyses Release of signal peptides from bacterial membrane prolipoproteins. Hydrolyzes -Xaa-Yaa-Zaa-|-(S,diacylglyceryl)Cys-, in which Xaa is hydrophobic (preferably Leu), and Yaa (Ala or Ser) and Zaa (Gly or Ala) have small, neutral side chains.. It participates in protein modification; lipoprotein biosynthesis (signal peptide cleavage). In terms of biological role, this protein specifically catalyzes the removal of signal peptides from prolipoproteins. This Lactococcus lactis subsp. cremoris (strain SK11) protein is Lipoprotein signal peptidase.